We begin with the raw amino-acid sequence, 251 residues long: Small ribosomal subunit protein uS2 (251 aa).

It belongs to the universal ribosomal protein uS2 family.

The protein is Small ribosomal subunit protein uS2 of Novosphingobium aromaticivorans (strain ATCC 700278 / DSM 12444 / CCUG 56034 / CIP 105152 / NBRC 16084 / F199).